We begin with the raw amino-acid sequence, 304 residues long: MLFEQIAANKRKTIFIILGFFIFVLMVGAAIGIIVWNNYLNGLILAAVIGAFYILIMVMSSSSVVMAMNHAKEVTSKDQAPVLWDTVESMAMVAGIPMPKVYIVEDASPNAFATGISPEKGAVAVTRGLLNKLERYELEGVIAHEISHIRNYDIRLSTIAIALVAVIAILSDLAMRMIFWGSLTGGRNNRKSDNNNSGGAQAIIYIVALIFVILAPIIATAIQFALSRNREYLADASAVELTRNPDGLIQALQKISGDSKKMEEVSASSESIYFASPLKSKKNKPGLFDSHPPISSRIERLENM.

The next 2 membrane-spanning stretches (helical) occupy residues 14–34 and 39–59; these read IFII…IGII and YLNG…IMVM. Residue His-144 coordinates Zn(2+). The active site involves Glu-145. His-148 is a binding site for Zn(2+). Helical transmembrane passes span 159–179 and 202–222; these read IAIA…RMIF and AIIY…ATAI. Residue Glu-231 coordinates Zn(2+).

It belongs to the peptidase M48B family. Zn(2+) serves as cofactor.

The protein resides in the cell membrane. The sequence is that of Protease HtpX homolog from Listeria monocytogenes serotype 4b (strain CLIP80459).